The chain runs to 163 residues: Cyanate hydratase (163 aa).

Residues arginine 103, glutamate 106, and serine 129 contribute to the active site.

The protein belongs to the cyanase family.

The catalysed reaction is cyanate + hydrogencarbonate + 3 H(+) = NH4(+) + 2 CO2. Catalyzes the reaction of cyanate with bicarbonate to produce ammonia and carbon dioxide. The chain is Cyanate hydratase from Paracoccidioides brasiliensis (strain Pb18).